The primary structure comprises 520 residues: D-aminopeptidase (520 aa).

The Nucleophile role is filled by S62. K65 serves as the catalytic Proton donor/acceptor. Residues 477–487 (QRSMDAPSPGE) form an important for specificity region. Residue D481 coordinates substrate.

Belongs to the peptidase S12 family. In terms of assembly, homodimer.

The catalysed reaction is Release of an N-terminal D-amino acid from a peptide, Xaa-|-Yaa-, in which Xaa is preferably D-Ala, D-Ser or D-Thr. D-amino acid amides and methyl esters also are hydrolyzed, as is glycine amide.. Inhibited by beta-lactam compounds such as 6-aminopenicillic acid, 7-aminocephalosporanic acid, benzylpenicillin and ampicillin. Inhibited by p-chloromercuribenzoate. Its function is as follows. Hydrolyzes N-terminal residues in D-amino acid-containing peptides. This Brucella anthropi (strain ATCC 49188 / DSM 6882 / CCUG 24695 / JCM 21032 / LMG 3331 / NBRC 15819 / NCTC 12168 / Alc 37) (Ochrobactrum anthropi) protein is D-aminopeptidase.